The following is a 117-amino-acid chain: Ribonuclease P protein component (117 aa).

It belongs to the RnpA family. In terms of assembly, consists of a catalytic RNA component (M1 or rnpB) and a protein subunit.

It carries out the reaction Endonucleolytic cleavage of RNA, removing 5'-extranucleotides from tRNA precursor.. In terms of biological role, RNaseP catalyzes the removal of the 5'-leader sequence from pre-tRNA to produce the mature 5'-terminus. It can also cleave other RNA substrates such as 4.5S RNA. The protein component plays an auxiliary but essential role in vivo by binding to the 5'-leader sequence and broadening the substrate specificity of the ribozyme. The chain is Ribonuclease P protein component from Lactococcus lactis subsp. lactis (strain IL1403) (Streptococcus lactis).